A 1226-amino-acid chain; its full sequence is DNA-directed RNA polymerase subunit beta (1226 aa).

This sequence belongs to the RNA polymerase beta chain family. In terms of assembly, the RNAP catalytic core consists of 2 alpha, 1 beta, 1 beta' and 1 omega subunit. When a sigma factor is associated with the core the holoenzyme is formed, which can initiate transcription.

The catalysed reaction is RNA(n) + a ribonucleoside 5'-triphosphate = RNA(n+1) + diphosphate. Its function is as follows. DNA-dependent RNA polymerase catalyzes the transcription of DNA into RNA using the four ribonucleoside triphosphates as substrates. This chain is DNA-directed RNA polymerase subunit beta, found in Leptospira interrogans serogroup Icterohaemorrhagiae serovar copenhageni (strain Fiocruz L1-130).